Reading from the N-terminus, the 118-residue chain is Large ribosomal subunit protein bL20 (118 aa).

Belongs to the bacterial ribosomal protein bL20 family.

Functionally, binds directly to 23S ribosomal RNA and is necessary for the in vitro assembly process of the 50S ribosomal subunit. It is not involved in the protein synthesizing functions of that subunit. This Thermosipho africanus (strain TCF52B) protein is Large ribosomal subunit protein bL20.